The sequence spans 228 residues: Ferric nitrobindin-like protein (228 aa).

Residues 1-21 (MTSDEVRDGAGSPADSSKGNK) are disordered. A GXWXGXG motif is present at residues 75–81 (GVWRGEG).

This sequence belongs to the nitrobindin family.

In Mycobacterium leprae (strain TN), this protein is Ferric nitrobindin-like protein.